Here is a 218-residue protein sequence, read N- to C-terminus: Calcineurin B-like protein 5 (218 aa).

4 consecutive EF-hand domains span residues 35-69 (EVEALYDLFRKLSNSIIKDGLIHKEEFHLALFRNK), 70-105 (KTNLFVDRVFDLFDQKGNGVIEFDEFVRSLSVFHPD), 107-142 (PEEQKAGFAFKLYDLRQTGFIERHELKEMVLALLDE), and 151-186 (AVEMIVDRTFDQADTKGDERIDQEEWNEFVKNNPYV).

It belongs to the calcineurin regulatory subunit family. Homodimer. In terms of tissue distribution, expressed at low levels in roots, shoots, culms, leaves and young spikelets.

Acts as a calcium sensor. CBL proteins interact with CIPK serine-threonine protein kinases. Binding of a CBL protein to the regulatory NAF domain of a CIPK protein lead to the activation of the kinase in a calcium-dependent manner. This chain is Calcineurin B-like protein 5 (CBL5), found in Oryza sativa subsp. japonica (Rice).